Here is a 132-residue protein sequence, read N- to C-terminus: Small ribosomal subunit protein uS8 (132 aa).

The protein belongs to the universal ribosomal protein uS8 family. As to quaternary structure, part of the 30S ribosomal subunit. Contacts proteins S5 and S12.

Functionally, one of the primary rRNA binding proteins, it binds directly to 16S rRNA central domain where it helps coordinate assembly of the platform of the 30S subunit. This chain is Small ribosomal subunit protein uS8, found in Bacillus velezensis (strain DSM 23117 / BGSC 10A6 / LMG 26770 / FZB42) (Bacillus amyloliquefaciens subsp. plantarum).